The primary structure comprises 316 residues: UDP-N-acetyl-2-amino-2-deoxy-D-glucuronate oxidase (316 aa).

Residues glycine 11–isoleucine 13, tyrosine 32–serine 37, glutamate 55, asparagine 81–histidine 84, glutamate 101–lysine 102, glutamine 130, and tryptophan 171–lysine 172 each bind NAD(+).

It belongs to the Gfo/Idh/MocA family. In terms of assembly, homotetramer.

The enzyme catalyses UDP-2-acetamido-2-deoxy-alpha-D-glucuronate + NAD(+) = UDP-2-acetamido-2-deoxy-alpha-D-ribo-hex-3-uluronate + NADH + H(+). It catalyses the reaction 2-hydroxyglutarate + NAD(+) = 2-oxoglutarate + NADH + H(+). It functions in the pathway bacterial outer membrane biogenesis; LPS O-antigen biosynthesis. Functionally, plays a role in the biosynthesis of B-band O antigen for serotype O5. Catalyzes the NAD-dependent oxidation of UDP-N-acetylglucosaminuronic acid (UDP-D-GlcNAcA) to UDP-2-acetamido-2-deoxy-3-oxo-D-glucuronic acid (UDP-3-oxo-D-GlcNAcA). Cannot use UDP-GlcNAc or UDP-GalNAc as the nucleotide sugar substrate, and can use only poorly UDP-D-glucuronic acid (UDP-GlcA). Undergoes an NAD(+) recycling mechanism using 2-oxoglutarate as an oxidant. The polypeptide is UDP-N-acetyl-2-amino-2-deoxy-D-glucuronate oxidase (Pseudomonas aeruginosa (strain ATCC 15692 / DSM 22644 / CIP 104116 / JCM 14847 / LMG 12228 / 1C / PRS 101 / PAO1)).